We begin with the raw amino-acid sequence, 29 residues long: Trypsin inhibitor 4 (29 aa).

3 disulfides stabilise this stretch: Cys3/Cys20, Cys10/Cys22, and Cys16/Cys28.

Belongs to the protease inhibitor I7 (squash-type serine protease inhibitor) family.

Its subcellular location is the secreted. Strongly inhibits trypsin, weakly inhibits chymotrypsin. This chain is Trypsin inhibitor 4, found in Cyclanthera pedata (Achocha).